A 430-amino-acid polypeptide reads, in one-letter code: Adenylosuccinate synthetase (430 aa).

Residues 12-18 (GDEGKGK) and 40-42 (GHT) contribute to the GTP site. Asp13 serves as the catalytic Proton acceptor. Residues Asp13 and Gly40 each coordinate Mg(2+). IMP is bound by residues 13–16 (DEGK), 38–41 (NAGH), Thr128, Arg142, Gln223, Thr238, and Arg302. The active-site Proton donor is His41. 298-304 (TTTGRPR) serves as a coordination point for substrate. Residues Arg304, 330–332 (SID), and 412–414 (SVG) each bind GTP.

This sequence belongs to the adenylosuccinate synthetase family. Homodimer. Mg(2+) serves as cofactor.

The protein resides in the cytoplasm. The catalysed reaction is IMP + L-aspartate + GTP = N(6)-(1,2-dicarboxyethyl)-AMP + GDP + phosphate + 2 H(+). It functions in the pathway purine metabolism; AMP biosynthesis via de novo pathway; AMP from IMP: step 1/2. Plays an important role in the de novo pathway of purine nucleotide biosynthesis. Catalyzes the first committed step in the biosynthesis of AMP from IMP. The sequence is that of Adenylosuccinate synthetase from Streptococcus pyogenes serotype M49 (strain NZ131).